The following is a 302-amino-acid chain: tRNA pseudouridine synthase B (302 aa).

The Nucleophile role is filled by aspartate 38.

The protein belongs to the pseudouridine synthase TruB family. Type 1 subfamily.

It carries out the reaction uridine(55) in tRNA = pseudouridine(55) in tRNA. Functionally, responsible for synthesis of pseudouridine from uracil-55 in the psi GC loop of transfer RNAs. This Geobacillus thermodenitrificans (strain NG80-2) protein is tRNA pseudouridine synthase B.